A 739-amino-acid polypeptide reads, in one-letter code: Polyphosphate kinase (739 aa).

The interval 22–45 (WHSDNSALAAPPAATTSASQDQLP) is disordered. Residues 27–40 (SALAAPPAATTSAS) show a composition bias toward low complexity. ATP is bound at residue Asn87. The Mg(2+) site is built by Arg428 and Arg458. The active-site Phosphohistidine intermediate is His488. 3 residues coordinate ATP: Tyr521, Arg621, and His649. The tract at residues 714–739 (QWTASPQKGQQVRDHQESLMERHRSR) is disordered. Residues 724 to 739 (QVRDHQESLMERHRSR) are compositionally biased toward basic and acidic residues.

The protein belongs to the polyphosphate kinase 1 (PPK1) family. Requires Mg(2+) as cofactor. An intermediate of this reaction is the autophosphorylated ppk in which a phosphate is covalently linked to a histidine residue through a N-P bond.

The enzyme catalyses [phosphate](n) + ATP = [phosphate](n+1) + ADP. Functionally, catalyzes the reversible transfer of the terminal phosphate of ATP to form a long-chain polyphosphate (polyP). In Mycobacterium leprae (strain TN), this protein is Polyphosphate kinase.